The following is a 437-amino-acid chain: Glutamyl-tRNA reductase (437 aa).

Substrate is bound by residues threonine 49–arginine 52, serine 109, glutamate 114–glutamine 116, and glutamine 120. Catalysis depends on cysteine 50, which acts as the Nucleophile. Glycine 198–serine 203 is a binding site for NADP(+).

It belongs to the glutamyl-tRNA reductase family. As to quaternary structure, homodimer.

The enzyme catalyses (S)-4-amino-5-oxopentanoate + tRNA(Glu) + NADP(+) = L-glutamyl-tRNA(Glu) + NADPH + H(+). The protein operates within porphyrin-containing compound metabolism; protoporphyrin-IX biosynthesis; 5-aminolevulinate from L-glutamyl-tRNA(Glu): step 1/2. It functions in the pathway porphyrin-containing compound metabolism; chlorophyll biosynthesis. Functionally, catalyzes the NADPH-dependent reduction of glutamyl-tRNA(Glu) to glutamate 1-semialdehyde (GSA). The protein is Glutamyl-tRNA reductase of Prochlorococcus marinus (strain SARG / CCMP1375 / SS120).